Consider the following 89-residue polypeptide: Small ribosomal subunit protein uS15 (89 aa).

A compositionally biased stretch (polar residues) spans 1–10; it reads MAVTTDQKSQ. The interval 1–22 is disordered; the sequence is MAVTTDQKSQVMRDYQRAAGDT.

This sequence belongs to the universal ribosomal protein uS15 family. Part of the 30S ribosomal subunit. Forms a bridge to the 50S subunit in the 70S ribosome, contacting the 23S rRNA.

Its function is as follows. One of the primary rRNA binding proteins, it binds directly to 16S rRNA where it helps nucleate assembly of the platform of the 30S subunit by binding and bridging several RNA helices of the 16S rRNA. In terms of biological role, forms an intersubunit bridge (bridge B4) with the 23S rRNA of the 50S subunit in the ribosome. This is Small ribosomal subunit protein uS15 from Nitrosomonas europaea (strain ATCC 19718 / CIP 103999 / KCTC 2705 / NBRC 14298).